Reading from the N-terminus, the 867-residue chain is MDLMSFILLWAGLMKVAEASIAQFSQLGASAPGNIIIGGLFPIHEAVVPVNYTGNNSISAPEHPDCIRFYTKGLNQALAMINAVEMANKSPMLSSLNITLGYRIYDTCSDVTTALRAVHDIMRPFSDCESPEDSSQPVQPIMAVIGTTSSEISIAVARDLNLQMIPQISYASTATILSDKSRFPAFMRTVPSDEYQTCAMAKLLKSNKWSWVGIIITDGDYGRSALEGFIQHTETEGICIAFKAILPDSLADQQKLNTDIENTLNIIENNPKVRVVISFAKSSQMQLLFKGLQSRNISNNMVWVASDNWSTAKHILNDGSITDIGKVLGFTFKSGNFTSFHQYLKNLQFESEDEMNNSFLKEFLKLNAGNASNTVLELMKSTNLDKIFSIEMAVTAVANAVAKLCAERQCQDSTALQPWELLRQLRSITFENGGEMYKFDANGDINLGYDLFLWEGDQSDEHADDIIAEYDPTKGGFHYIHNDLSEIKKVVSRCSNSCQPGQYKKTAEGQHTCCYECLTCVENHYSNITDADECSPCDSESMWSLANSTECHPKVFEYFDWNSGFAIVLLILAALGVLLLFFMSALFFWQRHSPVVKAAGGPLCHLILVSLLGSFISVVFFVGEPSDLTCRARQVIFGFSFTLCVSCILVKSLKILLAFEMNFELKELLCMLYKPYMIVSVGMGVQIIICTVWLTLYKPFKDKEVQTESILLECNEGFYVMFWLMLGYIALLALFCFTFAYIGRKLPQKYNEAKFITFSMVICLMAWIIFIPIHVTTSGKYVPAVEMVVILISNYGILSCHFLPKSYIILFKKEHNTKDAFMKNVYEYARKSAENIKGLTGTEPQFKQENSVYTISNLSFVPEEKHE.

The signal sequence occupies residues 1 to 19 (MDLMSFILLWAGLMKVAEA). Over 20–566 (SIAQFSQLGA…EYFDWNSGFA (547 aa)) the chain is Extracellular. N-linked (GlcNAc...) asparagine glycans are attached at residues Asn51, Asn55, Asn97, Asn296, Asn308, Asn336, Asn356, Asn370, Asn527, and Asn547. The helical transmembrane segment at 567-587 (IVLLILAALGVLLLFFMSALF) threads the bilayer. At 588–602 (FWQRHSPVVKAAGGP) the chain is on the cytoplasmic side. Residues 603 to 623 (LCHLILVSLLGSFISVVFFVG) form a helical membrane-spanning segment. Over 624-634 (EPSDLTCRARQ) the chain is Extracellular. Residues 635–655 (VIFGFSFTLCVSCILVKSLKI) form a helical membrane-spanning segment. The Cytoplasmic portion of the chain corresponds to 656-675 (LLAFEMNFELKELLCMLYKP). The helical transmembrane segment at 676-696 (YMIVSVGMGVQIIICTVWLTL) threads the bilayer. At 697-716 (YKPFKDKEVQTESILLECNE) the chain is on the extracellular side. A helical membrane pass occupies residues 717–737 (GFYVMFWLMLGYIALLALFCF). Topologically, residues 738-754 (TFAYIGRKLPQKYNEAK) are cytoplasmic. A helical transmembrane segment spans residues 755–775 (FITFSMVICLMAWIIFIPIHV). The Extracellular portion of the chain corresponds to 776–781 (TTSGKY). Residues 782–802 (VPAVEMVVILISNYGILSCHF) traverse the membrane as a helical segment. Residues 803–867 (LPKSYIILFK…LSFVPEEKHE (65 aa)) are Cytoplasmic-facing.

The protein belongs to the G-protein coupled receptor 3 family. Homodimer; disulfide-linked.

Its subcellular location is the cell membrane. Functionally, olfactory receptor that is activated by amino acids that act as potent odorants in fish. Displays preference for acidic amino acids such as Glu over basic amino acids. This Danio rerio (Zebrafish) protein is G-protein coupled receptor family C group 6 member A (gprc6a).